The primary structure comprises 540 residues: Chaperonin GroEL (540 aa).

Residues 29–32 (TLGP), 86–90 (DGTTT), G413, and D493 each bind ATP. A disordered region spans residues 520–540 (AEKPEPKPAPGPADPGAGMDF).

Belongs to the chaperonin (HSP60) family. In terms of assembly, forms a cylinder of 14 subunits composed of two heptameric rings stacked back-to-back. Interacts with the co-chaperonin GroES.

It is found in the cytoplasm. The enzyme catalyses ATP + H2O + a folded polypeptide = ADP + phosphate + an unfolded polypeptide.. Together with its co-chaperonin GroES, plays an essential role in assisting protein folding. The GroEL-GroES system forms a nano-cage that allows encapsulation of the non-native substrate proteins and provides a physical environment optimized to promote and accelerate protein folding. This Tropheryma whipplei (strain TW08/27) (Whipple's bacillus) protein is Chaperonin GroEL.